We begin with the raw amino-acid sequence, 68 residues long: Protein transport protein Sec61 gamma-2 subunit (68 aa).

Over 1-32 (MDKVVKFAEPGRAFAKDSIRLVKRCTKPDRKE) the chain is Cytoplasmic. A helical membrane pass occupies residues 33–61 (FQKIAIATAVGFCIMGFIGFFVKLIHIPI). The Extracellular segment spans residues 62–68 (NNIIVGS).

This sequence belongs to the SecE/SEC61-gamma family. As to quaternary structure, heterotrimeric complex composed of SEC61-alpha, SEC61-beta and SEC61-gamma.

Its subcellular location is the endoplasmic reticulum membrane. Functionally, necessary for protein translocation in the endoplasmic reticulum. This is Protein transport protein Sec61 gamma-2 subunit (Sec61gamma) from Drosophila melanogaster (Fruit fly).